Consider the following 174-residue polypeptide: Co-chaperone protein HscB homolog (174 aa).

One can recognise a J domain in the interval 2-74 (NYFELFKFPP…IRRAEHMLSL (73 aa)).

This sequence belongs to the HscB family. As to quaternary structure, interacts with HscA and stimulates its ATPase activity.

Its function is as follows. Co-chaperone involved in the maturation of iron-sulfur cluster-containing proteins. Seems to help targeting proteins to be folded toward HscA. This chain is Co-chaperone protein HscB homolog, found in Shewanella baltica (strain OS195).